Here is a 434-residue protein sequence, read N- to C-terminus: UDP-glucose 6-dehydrogenase (434 aa).

Residues 2 to 19 (NITF…GIIM), V11, D30, K35, T121, and E152 each bind NAD(+). Substrate-binding positions include 148 to 152 (EFLRE), K204, N208, 249 to 253 (FLNAG), and G257. C260 serves as the catalytic Nucleophile. Position 263 (K263) interacts with NAD(+). K321 contacts substrate. R328 serves as a coordination point for NAD(+).

The protein belongs to the UDP-glucose/GDP-mannose dehydrogenase family.

The enzyme catalyses UDP-alpha-D-glucose + 2 NAD(+) + H2O = UDP-alpha-D-glucuronate + 2 NADH + 3 H(+). It participates in nucleotide-sugar biosynthesis; UDP-alpha-D-glucuronate biosynthesis; UDP-alpha-D-glucuronate from UDP-alpha-D-glucose: step 1/1. The protein is UDP-glucose 6-dehydrogenase (udg) of Rickettsia prowazekii (strain Madrid E).